A 490-amino-acid polypeptide reads, in one-letter code: Dual specificity protein kinase CLK3 (490 aa).

The tract at residues 1-138 (MHHCKRYRSP…SKRSSRSVED (138 aa)) is disordered. Tyrosine 7 carries the post-translational modification Phosphotyrosine. Serine 9, serine 49, serine 51, serine 67, serine 76, and serine 78 each carry phosphoserine. Basic and acidic residues-rich tracts occupy residues 26–56 (YSRE…DRLP) and 63–76 (ERRD…EERS). The segment covering 88–116 (RSRHRRRSRERGPYRTRKHAHHCHKRRTR) has biased composition (basic residues). Positions 117–130 (SCSSASSRSQQSSK) are enriched in low complexity. Serine 135 bears the Phosphoserine mark. In terms of domain architecture, Protein kinase spans 156 to 472 (YEIVGNLGEG…LAEALLHPFF (317 aa)). ATP contacts are provided by residues 162–170 (LGEGTFGKV) and lysine 186. Aspartate 283 serves as the catalytic Proton acceptor.

This sequence belongs to the protein kinase superfamily. CMGC Ser/Thr protein kinase family. Lammer subfamily. Post-translationally, autophosphorylates on all three types of residues. Endothelial cells.

It localises to the nucleus. The protein resides in the cytoplasm. It is found in the cytoplasmic vesicle. The protein localises to the secretory vesicle. Its subcellular location is the acrosome. It localises to the nucleus speckle. The enzyme catalyses L-seryl-[protein] + ATP = O-phospho-L-seryl-[protein] + ADP + H(+). It catalyses the reaction L-threonyl-[protein] + ATP = O-phospho-L-threonyl-[protein] + ADP + H(+). It carries out the reaction L-tyrosyl-[protein] + ATP = O-phospho-L-tyrosyl-[protein] + ADP + H(+). Its activity is regulated as follows. Leucettine L41 inhibits its kinase activity and affects the regulation of alternative splicing mediated by phosphorylation of SR proteins. In terms of biological role, dual specificity kinase acting on both serine/threonine and tyrosine-containing substrates. Phosphorylates serine- and arginine-rich (SR) proteins of the spliceosomal complex. May be a constituent of a network of regulatory mechanisms that enable SR proteins to control RNA splicing and can cause redistribution of SR proteins from speckles to a diffuse nucleoplasmic distribution. Phosphorylates SRSF1 and SRSF3. Regulates the alternative splicing of tissue factor (F3) pre-mRNA in endothelial cells. This chain is Dual specificity protein kinase CLK3, found in Homo sapiens (Human).